A 526-amino-acid polypeptide reads, in one-letter code: Peptide chain release factor 3 (526 aa).

The 269-residue stretch at 9–277 folds into the tr-type G domain; sequence DLRRTFAIIS…GLTKWAPKPL (269 aa). GTP is bound by residues 18-25, 86-90, and 140-143; these read SHPDAGKT, DTPGH, and NKMD.

It belongs to the TRAFAC class translation factor GTPase superfamily. Classic translation factor GTPase family. PrfC subfamily.

The protein localises to the cytoplasm. In terms of biological role, increases the formation of ribosomal termination complexes and stimulates activities of RF-1 and RF-2. It binds guanine nucleotides and has strong preference for UGA stop codons. It may interact directly with the ribosome. The stimulation of RF-1 and RF-2 is significantly reduced by GTP and GDP, but not by GMP. The polypeptide is Peptide chain release factor 3 (Colwellia psychrerythraea (strain 34H / ATCC BAA-681) (Vibrio psychroerythus)).